The chain runs to 175 residues: Transcription factor E (175 aa).

Residues 8–90 (NDPVIQKYLH…LWTFQYENIP (83 aa)) enclose the HTH TFE/IIEalpha-type domain.

It belongs to the TFE family. As to quaternary structure, monomer. Interaction with RNA polymerase subunits RpoF and RpoE is necessary for Tfe stimulatory transcription activity. Able to interact with Tbp and RNA polymerase in the absence of DNA promoter. Interacts both with the preinitiation and elongation complexes.

In terms of biological role, transcription factor that plays a role in the activation of archaeal genes transcribed by RNA polymerase. Facilitates transcription initiation by enhancing TATA-box recognition by TATA-box-binding protein (Tbp), and transcription factor B (Tfb) and RNA polymerase recruitment. Not absolutely required for transcription in vitro, but particularly important in cases where Tbp or Tfb function is not optimal. It dynamically alters the nucleic acid-binding properties of RNA polymerases by stabilizing the initiation complex and destabilizing elongation complexes. Seems to translocate with the RNA polymerase following initiation and acts by binding to the non template strand of the transcription bubble in elongation complexes. In Natronomonas pharaonis (strain ATCC 35678 / DSM 2160 / CIP 103997 / JCM 8858 / NBRC 14720 / NCIMB 2260 / Gabara) (Halobacterium pharaonis), this protein is Transcription factor E.